Consider the following 179-residue polypeptide: MSREPVPSSFDEGNPQFTEETGMQKFTRRLKEEPLVPLGCAATCYALYRAYRSMKSGDSVEMNRMFRARIYAQAFTLVALVAGGMYFKTERQQRREFDQAVELRKKQEKRDAWLRELEIRDKEDREWRERHAAIEAAAKEAGNKAAPRKEPEAARSSIEPADEKSIGVMDAVRALISRN.

The region spanning 7-98 (PSSFDEGNPQ…TERQQRREFD (92 aa)) is the HIG1 domain. The next 2 helical transmembrane spans lie at 34–50 (PLVP…LYRA) and 70–87 (IYAQ…GMYF). The stretch at 98-118 (DQAVELRKKQEKRDAWLRELE) forms a coiled coil. Residues 136 to 153 (AAAKEAGNKAAPRKEPEA) show a composition bias toward basic and acidic residues. Residues 136-162 (AAAKEAGNKAAPRKEPEAARSSIEPAD) form a disordered region.

The protein belongs to the RCF1 family. In terms of assembly, associates with the respiratory chain complex III/complex IV supercomplex.

Its subcellular location is the mitochondrion membrane. Functionally, cytochrome c oxidase subunit which plays a role in assembly of respiratory supercomplexes. This Penicillium rubens (strain ATCC 28089 / DSM 1075 / NRRL 1951 / Wisconsin 54-1255) (Penicillium chrysogenum) protein is Respiratory supercomplex factor 1, mitochondrial (rcf1).